We begin with the raw amino-acid sequence, 300 residues long: MKQYLITGGTGMVGSQLVNEIKKSDSHITILTRHDQISNDKKISYVNWAKSGWEHKVPQNIDVVINLAGATLNKRWTPEYKQTLMLSRIQSTQALYELFKSRNKAPKVLFNASATGYYPPDLFMSYTEVYKTLPFDFLSDIVYQWERFAQQFEQLGTRVVIGRFGMILSNEGGALQTMKLPYKYYIGGRLGSGQQWYSWIHINDLIQAILFLINNESASGPFNLTAPIPERQNLFGYTLARAMHKPHETWAPSLAMRLILGQMSTVVLDTQKVLPNKIQALGFQFKYSNLKMALEDLIKE.

The protein belongs to the NAD(P)-dependent epimerase/dehydratase family. SDR39U1 subfamily.

The sequence is that of Epimerase family protein MW0731 from Staphylococcus aureus (strain MW2).